The sequence spans 118 residues: Large ribosomal subunit protein uL18 (118 aa).

It belongs to the universal ribosomal protein uL18 family. Part of the 50S ribosomal subunit; part of the 5S rRNA/L5/L18/L25 subcomplex. Contacts the 5S and 23S rRNAs.

This is one of the proteins that bind and probably mediate the attachment of the 5S RNA into the large ribosomal subunit, where it forms part of the central protuberance. The polypeptide is Large ribosomal subunit protein uL18 (Caulobacter sp. (strain K31)).